The following is a 130-amino-acid chain: Large ribosomal subunit protein bL17 (130 aa).

This sequence belongs to the bacterial ribosomal protein bL17 family. Part of the 50S ribosomal subunit. Contacts protein L32.

This is Large ribosomal subunit protein bL17 from Photorhabdus laumondii subsp. laumondii (strain DSM 15139 / CIP 105565 / TT01) (Photorhabdus luminescens subsp. laumondii).